The chain runs to 285 residues: ATP synthase gamma chain (285 aa).

This sequence belongs to the ATPase gamma chain family. In terms of assembly, F-type ATPases have 2 components, CF(1) - the catalytic core - and CF(0) - the membrane proton channel. CF(1) has five subunits: alpha(3), beta(3), gamma(1), delta(1), epsilon(1). CF(0) has three main subunits: a, b and c.

It localises to the cell membrane. Produces ATP from ADP in the presence of a proton gradient across the membrane. The gamma chain is believed to be important in regulating ATPase activity and the flow of protons through the CF(0) complex. The polypeptide is ATP synthase gamma chain (Geobacillus sp. (strain WCH70)).